The following is a 111-amino-acid chain: Magnetosome protein MamF (111 aa).

Over 1-17 the chain is Cytoplasmic; that stretch reads MAETILIETKTAGGNCR. A helical membrane pass occupies residues 18-38; sequence SYLMAGASYLGILCFVPLLMS. The Lumenal segment spans residues 39–50; the sequence is RDDEYVYFHAKQ. A helical transmembrane segment spans residues 51 to 71; sequence GLVLWMWSILAMFALHLPGIG. Lysine 72 is a topological domain (cytoplasmic). Residues 73–93 traverse the membrane as a helical segment; it reads WLFGFSSMGVLMLSVVGLVSV. Over 94 to 111 the chain is Lumenal; sequence ALRRTWRLPLISHVVALI.

It belongs to the magnetosome MamF/MmsF protein family. May form homooligomers. Post-translationally, subject to cleavage or degradation; identified by N-terminal sequencing of proteins that are about 103, 92 and 15 kDa in size.

The protein resides in the magnetosome membrane. Plays a role in regulating magnetite crystal size; partially redundant function with MmsF. In Magnetospirillum gryphiswaldense (strain DSM 6361 / JCM 21280 / NBRC 15271 / MSR-1), this protein is Magnetosome protein MamF.